Consider the following 272-residue polypeptide: Shikimate dehydrogenase (NADP(+)) (272 aa).

Shikimate is bound by residues 14–16 (SKS) and T61. K65 serves as the catalytic Proton acceptor. E77 contacts NADP(+). N86 and D102 together coordinate shikimate. Residues 126–130 (GAGGA), 149–154 (NRTVSR), and M213 each bind NADP(+). Residue Y215 coordinates shikimate. NADP(+) is bound at residue G237.

Belongs to the shikimate dehydrogenase family. In terms of assembly, homodimer.

The enzyme catalyses shikimate + NADP(+) = 3-dehydroshikimate + NADPH + H(+). It participates in metabolic intermediate biosynthesis; chorismate biosynthesis; chorismate from D-erythrose 4-phosphate and phosphoenolpyruvate: step 4/7. Its function is as follows. Involved in the biosynthesis of the chorismate, which leads to the biosynthesis of aromatic amino acids. Catalyzes the reversible NADPH linked reduction of 3-dehydroshikimate (DHSA) to yield shikimate (SA). The polypeptide is Shikimate dehydrogenase (NADP(+)) (Shigella boydii serotype 4 (strain Sb227)).